Reading from the N-terminus, the 813-residue chain is Leucine--tRNA ligase (813 aa).

The 'HIGH' region signature appears at 40-51 (SYPSGSKLHAGH). The short motif at 572 to 576 (KMSKS) is the 'KMSKS' region element. Lys575 is an ATP binding site.

This sequence belongs to the class-I aminoacyl-tRNA synthetase family.

It is found in the cytoplasm. It carries out the reaction tRNA(Leu) + L-leucine + ATP = L-leucyl-tRNA(Leu) + AMP + diphosphate. The protein is Leucine--tRNA ligase of Clostridium botulinum (strain Langeland / NCTC 10281 / Type F).